A 221-amino-acid polypeptide reads, in one-letter code: Ribosomal RNA small subunit methyltransferase G (221 aa).

Residues glycine 85, leucine 90, 138–139, and arginine 151 contribute to the S-adenosyl-L-methionine site; that span reads AE.

Belongs to the methyltransferase superfamily. RNA methyltransferase RsmG family.

The protein resides in the cytoplasm. The catalysed reaction is guanosine(527) in 16S rRNA + S-adenosyl-L-methionine = N(7)-methylguanosine(527) in 16S rRNA + S-adenosyl-L-homocysteine. In terms of biological role, specifically methylates the N7 position of guanine in position 527 of 16S rRNA. This Caulobacter sp. (strain K31) protein is Ribosomal RNA small subunit methyltransferase G.